A 352-amino-acid chain; its full sequence is Mas-related G-protein coupled receptor member X2 (352 aa).

The Extracellular segment spans residues methionine 1–methionine 45. Residues asparagine 5, asparagine 16, asparagine 23, asparagine 28, and asparagine 31 are each glycosylated (N-linked (GlcNAc...) asparagine). The chain crosses the membrane as a helical span at residues valine 46–phenylalanine 66. Over leucine 67–alanine 75 the chain is Cytoplasmic. The chain crosses the membrane as a helical span at residues phenylalanine 76 to glycine 96. The Extracellular portion of the chain corresponds to tyrosine 97–serine 107. The helical transmembrane segment at isoleucine 108–leucine 128 threads the bilayer. The Cytoplasmic portion of the chain corresponds to serine 129–histidine 155. A helical transmembrane segment spans residues threonine 156 to glycine 176. Residues lysine 177–aspartate 195 are Extracellular-facing. A helical transmembrane segment spans residues leucine 196–leucine 216. Residues valine 217–threonine 239 are Cytoplasmic-facing. Residues valine 240–isoleucine 260 form a helical membrane-spanning segment. Residues glutamate 261–threonine 275 lie on the Extracellular side of the membrane. Residues valine 276–isoleucine 296 traverse the membrane as a helical segment. Over arginine 297–isoleucine 347 the chain is Cytoplasmic.

This sequence belongs to the G-protein coupled receptor 1 family. Mas subfamily.

It localises to the cell membrane. In terms of biological role, orphan receptor. Probably involved in the function of nociceptive neurons. May regulate nociceptor function and/or development, including the sensation or modulation of pain. The polypeptide is Mas-related G-protein coupled receptor member X2 (Mrgprx2) (Mus musculus (Mouse)).